Consider the following 409-residue polypeptide: N-acetylglucosamine-6-phosphate deacetylase (409 aa).

E143 provides a ligand contact to a divalent metal cation. 154 to 155 serves as a coordination point for substrate; it reads AH. The a divalent metal cation site is built by H211 and H232. Substrate contacts are provided by residues 235 to 236, R243, and 269 to 272; these read NA and DGIH. The active-site Proton donor/acceptor is D294. Residue 328–330 coordinates substrate; sequence LGG.

This sequence belongs to the metallo-dependent hydrolases superfamily. NagA family. It depends on a divalent metal cation as a cofactor.

It carries out the reaction N-acetyl-D-glucosamine 6-phosphate + H2O = D-glucosamine 6-phosphate + acetate. It participates in amino-sugar metabolism; N-acetylneuraminate degradation. Its function is as follows. Hydrolyzes the N-glycolyl group from N-glycolylglucosamine 6-phosphate (GlcNGc-6-P) in the N-glycolylneuraminic acid (Neu5Gc) degradation pathway. In Mus musculus (Mouse), this protein is N-acetylglucosamine-6-phosphate deacetylase (Amdhd2).